Consider the following 271-residue polypeptide: CAAX prenyl protease 2 (271 aa).

The Extracellular portion of the chain corresponds to 1 to 9 (MISSYKYNP). The helical transmembrane segment at 10–30 (KLYFLSTFVVTYILWFTGAYL) threads the bilayer. Topologically, residues 31 to 38 (SFSSTYSG) are cytoplasmic. Residues 39-59 (IYMLIMLPGLMAPFIISTILI) form a helical membrane-spanning segment. Over 60–82 (AKSKNNELKKDFINRLFNLKLIN) the chain is Extracellular. The helical transmembrane segment at 83–105 (LKTIPVVFLLMPAVILLSILLSI) threads the bilayer. Residues 106–125 (PFGGSISQFQFSGGFSFSTD) lie on the Cytoplasmic side of the membrane. The chain crosses the membrane as a helical span at residues 126-149 (FVPVLFLLLLAATFEELGWRGYAF). Residue E140 is the Proton donor/acceptor of the active site. The Extracellular segment spans residues 150–159 (DSLQSRYSLF). Residues 160–179 (KASILFGIFWSLWHFPLIFV) form a helical membrane-spanning segment. H173 serves as the catalytic Proton donor/acceptor. Residues 180-192 (NNSYQYEIFNQSI) lie on the Cytoplasmic side of the membrane. The helical transmembrane segment at 193 to 213 (WYGLNFFLSILPMGIIITWMC) threads the bilayer. At 214–219 (LKNRKS) the chain is on the extracellular side. The helical transmembrane segment at 220–237 (IILAIIFHFLINLNQELL) threads the bilayer. Residues 238 to 243 (AITQDT) lie on the Cytoplasmic side of the membrane. The chain crosses the membrane as a helical span at residues 244 to 263 (KIIETGVLFLVAAAIILYDK). At 264–271 (KMFFEKLG) the chain is on the extracellular side.

This sequence belongs to the peptidase U48 family.

The protein localises to the cell membrane. It catalyses the reaction Hydrolyzes the peptide bond -P2-(S-farnesyl or geranylgeranyl)C-P1'-P2'-P3'-COOH where P1' and P2' are amino acids with aliphatic sidechains and P3' is any C-terminal residue.. Its activity is regulated as follows. Activity is unaffected by metalloprotease inhibitors 5 mM EDTA and 5 mM Zn(2+). Activity partially inhibited by 1,10-phenanthroline and 1,7-phenanthroline. Protease involved in the processing of a variety of prenylated proteins containing the C-terminal CAAX motif, where C is a cysteine modified with an isoprenoid lipid, A is an aliphatic amino acid and X is any C-terminal amino acid. Proteolytically removes the C-terminal three residues of farnesylated proteins, leaving the prenylated cysteine as the new C-terminus. Hydrolysis depends on a farnesylated cysteine residue and no activity is shown towards geranylgeranylated peptides. The chain is CAAX prenyl protease 2 from Methanococcus maripaludis (strain DSM 14266 / JCM 13030 / NBRC 101832 / S2 / LL).